Here is a 443-residue protein sequence, read N- to C-terminus: Enolase B (443 aa).

The substrate site is built by His-156 and Glu-165. Glu-208 serves as the catalytic Proton donor. The Mg(2+) site is built by Asp-243, Glu-296, and Asp-323. Positions 296 and 323 each coordinate substrate. The active-site Proton acceptor is the Lys-348. Substrate is bound by residues 375 to 378 and Lys-399; that span reads SHRS.

This sequence belongs to the enolase family. As to quaternary structure, homodimer. Mg(2+) serves as cofactor.

It is found in the cytoplasm. The enzyme catalyses (2R)-2-phosphoglycerate = phosphoenolpyruvate + H2O. The protein operates within carbohydrate degradation; glycolysis; pyruvate from D-glyceraldehyde 3-phosphate: step 4/5. The chain is Enolase B (enoB) from Dictyostelium discoideum (Social amoeba).